A 538-amino-acid chain; its full sequence is NAD(P)H-quinone oxidoreductase chain 4 (538 aa).

The next 14 membrane-spanning stretches (helical) occupy residues 11 to 31 (FPWL…VPFI), 43 to 63 (YALI…FKGF), 95 to 115 (MPLI…AWPV), 119 to 139 (PKLF…VFAV), 143 to 163 (LLFF…LAIW), 175 to 195 (FIIY…AMGF), 217 to 237 (GFQL…LPIV), 251 to 271 (TAPV…YALL), 285 to 305 (FAPL…LTSF), 314 to 334 (IAYS…SFSS), 340 to 360 (AMLQ…LVGA), 382 to 404 (IMFA…SGFI), 425 to 445 (IVVA…LLSM), and 472 to 492 (IYII…PKIM).

It belongs to the complex I subunit 4 family.

Its subcellular location is the cellular thylakoid membrane. It carries out the reaction a plastoquinone + NADH + (n+1) H(+)(in) = a plastoquinol + NAD(+) + n H(+)(out). The enzyme catalyses a plastoquinone + NADPH + (n+1) H(+)(in) = a plastoquinol + NADP(+) + n H(+)(out). NDH-1 shuttles electrons from NAD(P)H, via FMN and iron-sulfur (Fe-S) centers, to quinones in the respiratory chain. The immediate electron acceptor for the enzyme in this species is believed to be plastoquinone. Couples the redox reaction to proton translocation (for every two electrons transferred, four hydrogen ions are translocated across the cytoplasmic membrane), and thus conserves the redox energy in a proton gradient. The sequence is that of NAD(P)H-quinone oxidoreductase chain 4 from Prochlorococcus marinus (strain NATL1A).